A 112-amino-acid polypeptide reads, in one-letter code: MVKIRQFLLAILWLQLSCVSAAKNEVEQSPQNLTAQEGEFITINCSYSVGISALHWLQQHPGGGIVSLFMLSSGKKKHGRLIATINIQEKHSSLHITASHPRDSAVYICAVR.

An N-terminal signal peptide occupies residues 1 to 21; that stretch reads MVKIRQFLLAILWLQLSCVSA. Positions 24–112 constitute an Ig-like domain; sequence NEVEQSPQNL…DSAVYICAVR (89 aa). N-linked (GlcNAc...) asparagine glycans are attached at residues N32 and N44. An intrachain disulfide couples C45 to C109.

As to quaternary structure, alpha-beta TR is a heterodimer composed of an alpha and beta chain; disulfide-linked. The alpha-beta TR is associated with the transmembrane signaling CD3 coreceptor proteins to form the TR-CD3 (TcR or TCR). The assembly of alpha-beta TR heterodimers with CD3 occurs in the endoplasmic reticulum where a single alpha-beta TR heterodimer associates with one CD3D-CD3E heterodimer, one CD3G-CD3E heterodimer and one CD247 homodimer forming a stable octameric structure. CD3D-CD3E and CD3G-CD3E heterodimers preferentially associate with TR alpha and TR beta chains, respectively. The association of the CD247 homodimer is the last step of TcR assembly in the endoplasmic reticulum and is required for transport to the cell surface.

The protein localises to the cell membrane. Its function is as follows. V region of the variable domain of T cell receptor (TR) alpha chain that participates in the antigen recognition. Alpha-beta T cell receptors are antigen specific receptors which are essential to the immune response and are present on the cell surface of T lymphocytes. Recognize peptide-major histocompatibility (MH) (pMH) complexes that are displayed by antigen presenting cells (APC), a prerequisite for efficient T cell adaptive immunity against pathogens. Binding of alpha-beta TR to pMH complex initiates TR-CD3 clustering on the cell surface and intracellular activation of LCK that phosphorylates the ITAM motifs of CD3G, CD3D, CD3E and CD247 enabling the recruitment of ZAP70. In turn ZAP70 phosphorylates LAT, which recruits numerous signaling molecules to form the LAT signalosome. The LAT signalosome propagates signal branching to three major signaling pathways, the calcium, the mitogen-activated protein kinase (MAPK) kinase and the nuclear factor NF-kappa-B (NF-kB) pathways, leading to the mobilization of transcription factors that are critical for gene expression and essential for T cell growth and differentiation. The T cell repertoire is generated in the thymus, by V-(D)-J rearrangement. This repertoire is then shaped by intrathymic selection events to generate a peripheral T cell pool of self-MH restricted, non-autoaggressive T cells. Post-thymic interaction of alpha-beta TR with the pMH complexes shapes TR structural and functional avidity. The chain is T cell receptor alpha variable 41 from Homo sapiens (Human).